The chain runs to 136 residues: Small ribosomal subunit protein uS19 (136 aa).

It belongs to the universal ribosomal protein uS19 family.

Its function is as follows. Protein S19 forms a complex with S13 that binds strongly to the 16S ribosomal RNA. This chain is Small ribosomal subunit protein uS19 (rps19), found in Methanothermobacter thermautotrophicus (strain ATCC 29096 / DSM 1053 / JCM 10044 / NBRC 100330 / Delta H) (Methanobacterium thermoautotrophicum).